Consider the following 108-residue polypeptide: TYRO protein tyrosine kinase-binding protein (108 aa).

Residues 1 to 25 (MGRLGPSNGLLPLLLAVGGFSLVQA) form the signal peptide. Residues 26–36 (QRECSCSAVSP) are Extracellular-facing. A helical transmembrane segment spans residues 37-57 (GILAGIVLGDLVLTLLIALAV). A Ca(2+)-binding site is contributed by Asp46. Residues 58–108 (YSLGRLVPRTRGAVDVTRKQHIAETESAYQELQGQRSDVYSDLNTQRQYYK) lie on the Cytoplasmic side of the membrane. Positions 75 to 103 (RKQHIAETESAYQELQGQRSDVYSDLNTQ) constitute an ITAM domain. Phosphotyrosine occurs at positions 86 and 97.

Belongs to the TYROBP family. In terms of assembly, homodimer; disulfide-linked. Homotrimer; disulfide-linked. Homotetramer; disulfide-linked. Homotrimers and homotetramers form when low levels of partner receptors are available and is competitive with assembly with interacting receptors. They may represent alternative oligomerization states or may be intermediates in the receptor assembly process. Binding of a metal cation aids in homooligomerization through coordination of the metal ion by the subunits of the oligomer. Interacts with TREM1. Interacts with TREM2. Interacts with CLECSF5. Interacts with CD300LB and CD300C2. Interacts with CD300E. Interacts (via ITAM domain) with SYK (via SH2 domains); activates SYK mediating neutrophils and macrophages integrin-mediated activation. Interacts with KLRC2. Interacts with CD300H. Interacts with KLRD1. Interacts with SIGLEC1. Following ligand binding by associated receptors, tyrosine phosphorylated in the ITAM domain which leads to activation of additional tyrosine kinases and subsequent cell activation. In terms of tissue distribution, highly expressed in spleen, liver and thymus. Weakly expressed in lymph nodes. Expressed in peripheral blood leukocytes, granulocytes, macrophages, and monocytes. LPS does not increase expression in granulocytes.

It is found in the cell membrane. In terms of biological role, adapter protein which non-covalently associates with activating receptors found on the surface of a variety of immune cells to mediate signaling and cell activation following ligand binding by the receptors. TYROBP is tyrosine-phosphorylated in the ITAM domain following ligand binding by the associated receptors which leads to activation of additional tyrosine kinases and subsequent cell activation. Also has an inhibitory role in some cells. Non-covalently associates with activating receptors of the CD300 family to mediate cell activation. Also mediates cell activation through association with activating receptors of the CD200R family. Required for neutrophil activation mediated by integrin. Required for the activation of myeloid cells mediated by the CLEC5A/MDL1 receptor. Associates with natural killer (NK) cell receptors such as the KLRD1/KLRC2 heterodimer to mediate NK cell activation. Associates with TREM1 to mediate activation of neutrophils and monocytes. Associates with TREM2 on monocyte-derived dendritic cells to mediate up-regulation of chemokine receptor CCR7 and dendritic cell maturation and survival. Association with TREM2 mediates cytokine-induced formation of multinucleated giant cells which are formed by the fusion of macrophages. Stabilizes the TREM2 C-terminal fragment (TREM2-CTF) produced by TREM2 ectodomain shedding which suppresses the release of pro-inflammatory cytokines. In microglia, required with TREM2 for phagocytosis of apoptotic neurons. Required with ITGAM/CD11B in microglia to control production of microglial superoxide ions which promote the neuronal apoptosis that occurs during brain development. Promotes pro-inflammatory responses in microglia following nerve injury which accelerates degeneration of injured neurons. Positively regulates the expression of the IRAK3/IRAK-M kinase and IL10 production by liver dendritic cells and inhibits their T cell allosimulatory ability. Negatively regulates B cell proliferation. Required for CSF1-mediated osteoclast cytoskeletal organization. Positively regulates multinucleation during osteoclast development. The sequence is that of TYRO protein tyrosine kinase-binding protein from Sus scrofa (Pig).